The sequence spans 154 residues: Large ribosomal subunit protein uL13 (154 aa).

The protein belongs to the universal ribosomal protein uL13 family. In terms of assembly, part of the 50S ribosomal subunit.

In terms of biological role, this protein is one of the early assembly proteins of the 50S ribosomal subunit, although it is not seen to bind rRNA by itself. It is important during the early stages of 50S assembly. The sequence is that of Large ribosomal subunit protein uL13 from Brucella canis (strain ATCC 23365 / NCTC 10854 / RM-666).